A 132-amino-acid chain; its full sequence is MSSRREIRWGIARVYASQNNTLITITDITGAEIISRASGGMVVKADREKPSPYAAMLAANKAATEAFDKGISAIHIKVRAQGGYGSKTPGPGAQPAIRALARAGFIIGRIEDVTPIPHDSIRRPGGRRGRRV.

This sequence belongs to the universal ribosomal protein uS11 family. Part of the 30S ribosomal subunit.

Its function is as follows. Located on the platform of the 30S subunit. This Sulfurisphaera tokodaii (strain DSM 16993 / JCM 10545 / NBRC 100140 / 7) (Sulfolobus tokodaii) protein is Small ribosomal subunit protein uS11.